The following is a 333-amino-acid chain: Photosystem II assembly protein Ycf48 (333 aa).

An N-terminal signal peptide occupies residues methionine 1–arginine 25.

This sequence belongs to the Ycf48 family. As to quaternary structure, part of early PSII assembly complexes which includes D1 (psbA) and PsbI; not found in mature PSII. Binds to the lumenal side of PSII complexes. Interacts with YidC.

It is found in the cellular thylakoid lumen. Functionally, a factor required for optimal assembly of photosystem II (PSII), acting in the early stages of PSII assembly. Also plays a role in replacement of photodamaged D1 (psbA). Assists YidC in synthesis of chlorophyll-binding proteins. The sequence is that of Photosystem II assembly protein Ycf48 from Synechococcus sp. (strain JA-2-3B'a(2-13)) (Cyanobacteria bacterium Yellowstone B-Prime).